We begin with the raw amino-acid sequence, 285 residues long: Probable methyltransferase ltbC (285 aa).

A disordered region spans residues Met1–Gln22.

The protein belongs to the class I-like SAM-binding methyltransferase superfamily. As to quaternary structure, monomer.

In terms of biological role, probable methyltransferase; part of the gene cluster that mediates the biosynthesis of luteodienoside A, a glycosylated polyketide consisting of an unusual 1-O-beta-D-glucopyranosyl-myo-inositol (glucinol) ester of 3-hydroxy-2,2,4-trimethylocta-4,6-dienoic acid. The HR-PKS ltbA produces the trimethylated polyketide chain from acetyl-CoA, malonyl-CoA and S-adenosylmethionine (SAM), and the ltbA cAT domain then uses glucinol produced by the glycosyltransferase ltbB as an offloading substrate to release luteodienoside A. Since ltbA and ltbB are sufficient for the biosynthesis of luteodienoside A, the functions of the methyltransferase ltbC and the FAD-binding monooxygenase ltbD within the pathway remain obscur. The protein is Probable methyltransferase ltbC of Aspergillus luteorubrus.